We begin with the raw amino-acid sequence, 165 residues long: Small ribosomal subunit protein uS5 (165 aa).

The S5 DRBM domain occupies 10-73 (LKEKVVFINR…EDAKKHLVEV (64 aa)).

Belongs to the universal ribosomal protein uS5 family. Part of the 30S ribosomal subunit. Contacts proteins S4 and S8.

In terms of biological role, with S4 and S12 plays an important role in translational accuracy. Functionally, located at the back of the 30S subunit body where it stabilizes the conformation of the head with respect to the body. The chain is Small ribosomal subunit protein uS5 from Clostridium novyi (strain NT).